Consider the following 178-residue polypeptide: HTH-type transcriptional regulator SutR (178 aa).

An HTH cro/C1-type domain is found at 12-66 (LKQLRQQRGWSLSRLAEATGVSKAMLGQIERNESSPTVATLWKIATGLNVPFSTF). The segment at residues 23–42 (LSRLAEATGVSKAMLGQIER) is a DNA-binding region (H-T-H motif). The Cupin type-2 domain maps to 105-171 (QMASGAISES…GGEQTVHFHS (67 aa)).

In terms of biological role, regulates the expression of 12-16 transcription units involved in various steps of sulfur utilization. Represses expression of pfkB, fliZ, cysE, ydcO and its own expression. Activates expression of ypfN. Acts by binding to SutR boxes. The protein is HTH-type transcriptional regulator SutR of Escherichia coli (strain K12).